A 228-amino-acid chain; its full sequence is CD9 antigen (228 aa).

Residues 1-12 (MPVKGGTKCIKY) are Cytoplasmic-facing. A lipid anchor (S-palmitoyl cysteine) is attached at cysteine 9. The helical transmembrane segment at 13–33 (LLFGFNFIFWLAGIAVLAIGL) threads the bilayer. Over 34–55 (WLRFDSQTKSIFEQETNNNNSS) the chain is Extracellular. N-linked (GlcNAc...) asparagine glycosylation is found at asparagine 52 and asparagine 53. A helical membrane pass occupies residues 56-76 (FYTGVYILIGAGALMMLVGFL). Over 77-87 (GCCGAVQESQC) the chain is Cytoplasmic. 3 S-palmitoyl cysteine lipidation sites follow: cysteine 78, cysteine 79, and cysteine 87. Residues 88 to 111 (MLGLFFGFLLVIFAIEIAAAIWGY) form a helical membrane-spanning segment. The Extracellular segment spans residues 112–195 (SHKDEVIKEV…KEVFDNKFHI (84 aa)). 2 disulfides stabilise this stretch: cysteine 152-cysteine 181 and cysteine 153-cysteine 167. A helical transmembrane segment spans residues 196–221 (IGAVGIGIAVVMIFGMIFSMILCCAI). S-palmitoyl cysteine attachment occurs at residues cysteine 218 and cysteine 219. Over 222–228 (RRNREMV) the chain is Cytoplasmic.

The protein belongs to the tetraspanin (TM4SF) family. In terms of assembly, forms both disulfide-linked homodimers and higher homooligomers as well as heterooligomers with other members of the tetraspanin family. Interacts (via the second extracellular domain) with integrin ITGAV:ITGB3. Interacts with integrin ITGA6:ITGB1; interaction takes place in oocytes and is involved in sperm-egg fusion. Part of integrin-tetraspanin complexes composed of CD81, beta-1 and beta-2 integrins in the membrane of monocyte/macrophages. Interacts with CD63; identified in a complex with CD63 and ITGB3. Associates with CR2/CD21 and with PTGFRN/CD9P1. Part of a complex composed of CD9, CD81, PTGFRN and IGSF8. Interacts directly with IGSF8. Interacts with PDPN; this interaction is homophilic and attenuates platelet aggregation and pulmonary metastasis induced by PDPN. Interacts (on T cell side) with CD81 at immunological synapses between antigen-presenting cells and T cells. Palmitoylated at a low, basal level in unstimulated platelets. The level of palmitoylation increases when platelets are activated by thrombin (in vitro). The protein exists in three forms with molecular masses between 22 and 27 kDa, and is known to carry covalently linked fatty acids. Palmitoylation by ZDHHC2 regulates CD9 expression, association with other tetraspanin family proteins and function in cell adhesion.

It is found in the cell membrane. The protein localises to the membrane. The protein resides in the secreted. It localises to the extracellular exosome. Its function is as follows. Integral membrane protein associated with integrins, which regulates different processes, such as sperm-egg fusion, platelet activation and aggregation, and cell adhesion. Present at the cell surface of oocytes and plays a key role in sperm-egg fusion, possibly by organizing multiprotein complexes and the morphology of the membrane required for the fusion. In myoblasts, associates with CD81 and PTGFRN and inhibits myotube fusion during muscle regeneration. In macrophages, associates with CD81 and beta-1 and beta-2 integrins, and prevents macrophage fusion into multinucleated giant cells specialized in ingesting complement-opsonized large particles. Also prevents the fusion between mononuclear cell progenitors into osteoclasts in charge of bone resorption. Acts as a receptor for PSG17. Involved in platelet activation and aggregation. Regulates paranodal junction formation. Involved in cell adhesion, cell motility and tumor metastasis. The chain is CD9 antigen from Chlorocebus aethiops (Green monkey).